A 342-amino-acid polypeptide reads, in one-letter code: S-adenosyl-L-methionine-dependent tRNA 4-demethylwyosine synthase (342 aa).

6 residues coordinate [4Fe-4S] cluster: cysteine 45, cysteine 58, cysteine 71, cysteine 81, cysteine 85, and cysteine 88. The 249-residue stretch at 64-312 folds into the Radical SAM core domain; it reads YGIHSHRCLQ…VKHLPGYHIE (249 aa).

Belongs to the TYW1 family. Monomer. Requires [4Fe-4S] cluster as cofactor.

It is found in the cytoplasm. It catalyses the reaction N(1)-methylguanosine(37) in tRNA(Phe) + pyruvate + S-adenosyl-L-methionine = 4-demethylwyosine(37) in tRNA(Phe) + 5'-deoxyadenosine + L-methionine + CO2 + H2O. Component of the wyosine derivatives biosynthesis pathway that catalyzes the condensation of N-methylguanine with 2 carbon atoms from pyruvate to form the tricyclic 4-demethylwyosine (imG-14) on guanosine-37 of tRNA(Phe). This chain is S-adenosyl-L-methionine-dependent tRNA 4-demethylwyosine synthase, found in Pyrococcus abyssi (strain GE5 / Orsay).